Consider the following 525-residue polypeptide: uncharacterized protein (525 aa).

The first 21 residues, 1–21 (MLECLSALLVLFAGGGGSVLA), serve as a signal peptide directing secretion. The Extracellular portion of the chain corresponds to 22–448 (AVQSKTVADP…ISAASQLDKR (427 aa)). The tract at residues 242–264 (KVSSENCSKDTDDKSGSKKERNT) is disordered. Residues 449-469 (IFIFTAITVSITTLMMLGFSY) traverse the membrane as a helical segment. At 470–525 (RSRVSFRDHSIDDSDDDNDWSDDEVEFDEEYFYSLPVSIPEKGISLDKMAQQLGVE) the chain is on the cytoplasmic side.

It is found in the membrane. This is an uncharacterized protein from Saccharomyces cerevisiae (strain YJM789) (Baker's yeast).